The primary structure comprises 932 residues: Phosphatidylethanolamine N-methyltransferase (932 aa).

Basic and acidic residues-rich tracts occupy residues 1–21 (MADI…ERPS) and 29–38 (NSEDAKKKVL). A disordered region spans residues 1–61 (MADINHDGPK…KRKTFGRTPD (61 aa)). Over 1–88 (MADINHDGPK…SPSQPKNLSD (88 aa)) the chain is Lumenal. A helical membrane pass occupies residues 89 to 109 (LAILAVLASLIFTLYICPTSA). The Cytoplasmic portion of the chain corresponds to 110–112 (RKP). The chain crosses the membrane as a helical span at residues 113-133 (VFAAIFLFWRAAYNAGIGWLL). Residues 134-198 (EGQSKHNRLV…EYNTWLVFRR (65 aa)) are Lumenal-facing. The chain crosses the membrane as a helical span at residues 199 to 219 (VVDLILMCDFVSYCLFAIACF). Over 220 to 225 (NRPPES) the chain is Cytoplasmic. Residues 226 to 246 (WLLFGLRWTTGIVLFIFNVFV) traverse the membrane as a helical segment. Topologically, residues 247 to 261 (KLDAHRVVKDFAWYC) are lumenal. The helical transmembrane segment at 262 to 282 (YHVLFISIVAHAAQFAFLTLV) threads the bilayer. At 283 to 355 (EEPHIQKIYN…TDFHRSIDVT (73 aa)) the chain is on the cytoplasmic side. Residues 292-317 (NPPPPRRMRQNSEKFNPEDRPATAHS) are disordered. The span at 301–313 (QNSEKFNPEDRPA) shows a compositional bias: basic and acidic residues. Residues 356–376 (VVLLCFYMFCLATVTPNTIAV) traverse the membrane as a helical segment. Arg-377 is a topological domain (lumenal). A helical membrane pass occupies residues 378-398 (LFLFVHAFVWRLWYALGLGYI). The Cytoplasmic portion of the chain corresponds to 399-428 (LDRQSKKKNWTRHFIKHGDTKEEAWRQWKS). A helical transmembrane segment spans residues 429 to 449 (LYHLSMTMCHASFGAAVWKMY). At 450 to 454 (ELPSD) the chain is on the lumenal side. Residues 455–475 (WFLGLTLLRHVLGAGLLLLQL) traverse the membrane as a helical segment. The Cytoplasmic segment spans residues 476–518 (WTSTSIYDSLGEFGWFCGDFFFDPPSSNLTYSGIYRFLNNPER). A helical membrane pass occupies residues 519–539 (VLGLAGVWGLALITWNPPIFY). Topologically, residues 540 to 932 (LAATAHILNL…SRGRNTPTSR (393 aa)) are lumenal.

The protein belongs to the class VI-like SAM-binding methyltransferase superfamily. CHO2 family.

The protein resides in the endoplasmic reticulum membrane. It carries out the reaction a 1,2-diacyl-sn-glycero-3-phosphoethanolamine + S-adenosyl-L-methionine = a 1,2-diacyl-sn-glycero-3-phospho-N-methylethanolamine + S-adenosyl-L-homocysteine + H(+). It functions in the pathway phospholipid metabolism; phosphatidylcholine biosynthesis. Catalyzes the first step of the methylation pathway of phosphatidylcholine biosynthesis, the SAM-dependent methylation of phosphatidylethanolamine (PE) to phosphatidylmonomethylethanolamine (PMME). The sequence is that of Phosphatidylethanolamine N-methyltransferase (CHO2) from Phaeosphaeria nodorum (strain SN15 / ATCC MYA-4574 / FGSC 10173) (Glume blotch fungus).